We begin with the raw amino-acid sequence, 687 residues long: Polyphosphate kinase (687 aa).

Asn-45 contributes to the ATP binding site. Arg-375 and Arg-405 together coordinate Mg(2+). His-435 functions as the Phosphohistidine intermediate in the catalytic mechanism. Residues Tyr-472, Arg-568, and His-596 each coordinate ATP.

The protein belongs to the polyphosphate kinase 1 (PPK1) family. The cofactor is Mg(2+). Post-translationally, an intermediate of this reaction is the autophosphorylated ppk in which a phosphate is covalently linked to a histidine residue through a N-P bond.

It carries out the reaction [phosphate](n) + ATP = [phosphate](n+1) + ADP. Catalyzes the reversible transfer of the terminal phosphate of ATP to form a long-chain polyphosphate (polyP). The chain is Polyphosphate kinase from Burkholderia ambifaria (strain ATCC BAA-244 / DSM 16087 / CCUG 44356 / LMG 19182 / AMMD) (Burkholderia cepacia (strain AMMD)).